The chain runs to 468 residues: Flavin-containing monooxygenase FMO GS-OX-like 1 (468 aa).

16-21 (GLGAAG) serves as a coordination point for FAD. 211–216 (GSQASG) is an NADP(+) binding site.

The protein belongs to the FMO family. Requires FAD as cofactor.

In terms of biological role, catalyzes the conversion of methylthioalkyl glucosinolates of any chain length into methylsulfinylalkyl glucosinolates. This is Flavin-containing monooxygenase FMO GS-OX-like 1 from Arabidopsis thaliana (Mouse-ear cress).